The following is a 249-amino-acid chain: DNA repair protein RecO (249 aa).

It belongs to the RecO family.

Functionally, involved in DNA repair and RecF pathway recombination. The sequence is that of DNA repair protein RecO from Polaromonas naphthalenivorans (strain CJ2).